Here is a 516-residue protein sequence, read N- to C-terminus: GMP synthase [glutamine-hydrolyzing] (516 aa).

The 191-residue stretch at 8 to 198 (KILILDFGSQ…VVNICGCDTL (191 aa)) folds into the Glutamine amidotransferase type-1 domain. The active-site Nucleophile is the cysteine 84. Catalysis depends on residues histidine 172 and glutamate 174. Positions 199–391 (WNIENIIEND…LGLPYNMLYR (193 aa)) constitute a GMPS ATP-PPase domain. 226–232 (SGGVDSS) contributes to the ATP binding site.

Homodimer.

It carries out the reaction XMP + L-glutamine + ATP + H2O = GMP + L-glutamate + AMP + diphosphate + 2 H(+). It functions in the pathway purine metabolism; GMP biosynthesis; GMP from XMP (L-Gln route): step 1/1. Catalyzes the synthesis of GMP from XMP. In Francisella tularensis subsp. holarctica (strain LVS), this protein is GMP synthase [glutamine-hydrolyzing].